Here is a 194-residue protein sequence, read N- to C-terminus: MSNTWLVVGLGNPGPDYSHTRHNIGFMVAEELASRIGASFKSNKSRALVAEGRLGMGGPKLVLAKPQTFMNLSGGPTSALAKFYDLGADNVIAVQDEIDIPFNTIKLKIGGGEGGHNGLRDISKALGAKEYLRVRVGVGRPPGGQGDAAGHVLKVFSTAEKKELPFLIQDAADAVELLISDGLLAAQQKFHPAK.

Tyrosine 17 lines the tRNA pocket. Histidine 22 serves as the catalytic Proton acceptor. Residues phenylalanine 69, asparagine 71, and asparagine 117 each contribute to the tRNA site.

It belongs to the PTH family. As to quaternary structure, monomer.

It is found in the cytoplasm. It catalyses the reaction an N-acyl-L-alpha-aminoacyl-tRNA + H2O = an N-acyl-L-amino acid + a tRNA + H(+). Functionally, hydrolyzes ribosome-free peptidyl-tRNAs (with 1 or more amino acids incorporated), which drop off the ribosome during protein synthesis, or as a result of ribosome stalling. Catalyzes the release of premature peptidyl moieties from peptidyl-tRNA molecules trapped in stalled 50S ribosomal subunits, and thus maintains levels of free tRNAs and 50S ribosomes. This is Peptidyl-tRNA hydrolase from Renibacterium salmoninarum (strain ATCC 33209 / DSM 20767 / JCM 11484 / NBRC 15589 / NCIMB 2235).